The chain runs to 107 residues: MMVKVTYVDSANVSRTIEVAPGVSVMAAARSNDIPEIESDCGGVCTCAACHVYVDPDWVDKTGTASKVENGLLSLQETRRPNSRLSCQITLSEALDGLVIHTLEPEE.

Residues valine 3–glutamate 106 form the 2Fe-2S ferredoxin-type domain. 4 residues coordinate [2Fe-2S] cluster: cysteine 41, cysteine 47, cysteine 50, and cysteine 87.

Belongs to the adrenodoxin/putidaredoxin family. [2Fe-2S] cluster is required as a cofactor.

It participates in terpene metabolism; monoterpene degradation. Functionally, involved in the degradation of the cyclic monoterpene limonene. Probably part of an electron transfer system involved in the oxidation of limonene to perillyl alcohol. This is 2Fe-2S ferredoxin CtmE from Castellaniella defragrans (strain DSM 12143 / CCUG 39792 / 65Phen) (Alcaligenes defragrans).